The chain runs to 27 residues: SKSSSPCFGGKLDRIGSYSGLGCNSRK.

A disulfide bond links cysteine 7 and cysteine 23.

The protein belongs to the natriuretic peptide family.

It is found in the secreted. Hormone playing a key role in cardiovascular homeostasis through regulation of natriuresis, diuresis, and vasodilation. Has a cGMP-stimulating activity. The protein is Natriuretic peptides A (nppa) of Anguilla japonica (Japanese eel).